Here is a 182-residue protein sequence, read N- to C-terminus: Thymidine kinase (182 aa).

8-15 contributes to the ATP binding site; sequence GPMFSGKT. The active-site Proton acceptor is the glutamate 85. Phenylalanine 117 provides a ligand contact to substrate. Positions 142 and 145 each coordinate Zn(2+). Substrate is bound at residue 161 to 165; sequence IIEIG. 2 residues coordinate Zn(2+): cysteine 174 and cysteine 177.

Belongs to the thymidine kinase family.

It carries out the reaction thymidine + ATP = dTMP + ADP + H(+). This chain is Thymidine kinase (TK), found in Amsacta moorei entomopoxvirus (AmEPV).